The chain runs to 200 residues: Lipopolysaccharide core heptose(II)-phosphate phosphatase (200 aa).

An N-terminal signal peptide occupies residues 1–25 (MLAFCRSSLKSKKYFIILLALAAIA).

The protein belongs to the phosphoglycerate mutase family. Ais subfamily.

The protein resides in the periplasm. It functions in the pathway bacterial outer membrane biogenesis; lipopolysaccharide metabolism. Functionally, catalyzes the dephosphorylation of heptose(II) of the outer membrane lipopolysaccharide core. The chain is Lipopolysaccharide core heptose(II)-phosphate phosphatase from Escherichia coli O7:K1 (strain IAI39 / ExPEC).